The chain runs to 169 residues: NADH-quinone oxidoreductase subunit I (169 aa).

4Fe-4S ferredoxin-type domains follow at residues 61 to 90 and 100 to 129; these read RRYDNGEERCIACKLCEAVCPALAITIESE and TRYDIDLTKCIFCGFCEESCPVDSIVETHI. Residues cysteine 70, cysteine 73, cysteine 76, cysteine 80, cysteine 109, cysteine 112, cysteine 115, and cysteine 119 each contribute to the [4Fe-4S] cluster site.

It belongs to the complex I 23 kDa subunit family. As to quaternary structure, NDH-1 is composed of 14 different subunits. Subunits NuoA, H, J, K, L, M, N constitute the membrane sector of the complex. Requires [4Fe-4S] cluster as cofactor.

It localises to the cell inner membrane. It carries out the reaction a quinone + NADH + 5 H(+)(in) = a quinol + NAD(+) + 4 H(+)(out). In terms of biological role, NDH-1 shuttles electrons from NADH, via FMN and iron-sulfur (Fe-S) centers, to quinones in the respiratory chain. The immediate electron acceptor for the enzyme in this species is believed to be ubiquinone. Couples the redox reaction to proton translocation (for every two electrons transferred, four hydrogen ions are translocated across the cytoplasmic membrane), and thus conserves the redox energy in a proton gradient. The sequence is that of NADH-quinone oxidoreductase subunit I from Verminephrobacter eiseniae (strain EF01-2).